Reading from the N-terminus, the 166-residue chain is Probable histone deacetylase complex subunit SAP18 (166 aa).

The disordered stretch occupies residues 143–166 (GRRFNNREQGDRFDHRQRQRSPIR). Residues 147-158 (NNREQGDRFDHR) show a composition bias toward basic and acidic residues.

The protein belongs to the SAP18 family. As to quaternary structure, interacts with SIN3 and histone deacetylase.

Acts in transcription repression. Involved in the tethering of the SIN3 complex to core histone proteins. This is Probable histone deacetylase complex subunit SAP18 from Caenorhabditis elegans.